Reading from the N-terminus, the 110-residue chain is MIVTTSPNIEGKQIIEYKKIVFGEVITGVNFMKDIGAGLRNFFGGRSQGYEDELINAREEAIREMESRAKDIGANAVIGVDIDYEVLGADNGMLMVTASGTAVVIEVQDY.

This sequence belongs to the UPF0145 family.

The protein is UPF0145 protein of Listeria welshimeri.